Here is a 379-residue protein sequence, read N- to C-terminus: NAD-dependent protein deacetylase sirtuin-2 (379 aa).

A compositionally biased stretch (basic and acidic residues) spans 1-10; that stretch reads MSEEVSKRVE. The segment at 1 to 32 is disordered; it reads MSEEVSKRVEEEADTPGLEGQSDDSSDEGDAS. Over residues 21–32 the composition is skewed to acidic residues; that stretch reads QSDDSSDEGDAS. The 281-residue stretch at 55–335 folds into the Deacetylase sirtuin-type domain; the sequence is KVLDELTLDS…MTLAELLGWK (281 aa). NAD(+) contacts are provided by residues 83 to 87, 93 to 95, and 165 to 168; these read AGIST, DFR, and QNID. Residue H185 is the Proton acceptor of the active site. Zn(2+) contacts are provided by C193, C198, C219, and C222. Residues 260–261, 284–286, and C321 each bind NAD(+); these read TS and NME. Residues 349 to 361 are compositionally biased toward basic and acidic residues; it reads IDSKDAKKTDKEA. A disordered region spans residues 349–379; it reads IDSKDAKKTDKEASQSSKSAVAEAEKTDKTE.

It belongs to the sirtuin family. Class I subfamily. Requires Zn(2+) as cofactor.

Its subcellular location is the cytoplasm. The protein resides in the nucleus. It catalyses the reaction N(6)-acetyl-L-lysyl-[protein] + NAD(+) + H2O = 2''-O-acetyl-ADP-D-ribose + nicotinamide + L-lysyl-[protein]. The catalysed reaction is N(6)-tetradecanoyl-L-lysyl-[protein] + NAD(+) + H2O = 2''-O-tetradecanoyl-ADP-D-ribose + nicotinamide + L-lysyl-[protein]. The enzyme catalyses N(6)-hexadecanoyl-L-lysyl-[protein] + NAD(+) + H2O = 2''-O-hexadecanoyl-ADP-D-ribose + nicotinamide + L-lysyl-[protein]. Functionally, NAD-dependent protein deacetylase, which deacetylates internal lysines on histone and alpha-tubulin as well as many other proteins such as key transcription factors. Participates in the modulation of multiple and diverse biological processes such as cell cycle control, genomic integrity, microtubule dynamics, cell differentiation, metabolic networks, and autophagy. Plays a major role in the control of cell cycle progression and genomic stability. Deacetylates histone H4 at 'Lys-16' (H4K16ac) at the VEGFA promoter. Thereby contributes to regulate expression of vegfa, a key regulator of angiogenesis. In addition to protein deacetylase activity, also has activity toward long-chain fatty acyl groups and mediates protein-lysine demyristoylation and depalmitoylation of target proteins. The protein is NAD-dependent protein deacetylase sirtuin-2 (sirt2) of Danio rerio (Zebrafish).